The chain runs to 358 residues: Cytochrome c peroxidase, mitochondrial (358 aa).

The N-terminal 38 residues, 1–38, are a transit peptide targeting the mitochondrion; sequence MAASRTATRTLRALRTSTRPALTAAPRAAFRQGGRRLY. Catalysis depends on H119, which acts as the Proton acceptor. A disordered region spans residues 192–214; sequence PYRPGRQDRDAAGCTPDGRLPDA. H242 is a heme b binding site. The Tryptophan radical intermediate role is filled by W258.

It belongs to the peroxidase family. Cytochrome c peroxidase subfamily. In terms of assembly, forms a one-to-one complex with cytochrome c. The cofactor is heme b.

It is found in the mitochondrion matrix. The protein resides in the mitochondrion intermembrane space. The enzyme catalyses 2 Fe(II)-[cytochrome c] + H2O2 + 2 H(+) = 2 Fe(III)-[cytochrome c] + 2 H2O. Its function is as follows. Destroys radicals which are normally produced within the cells and which are toxic to biological systems. In Neurospora crassa (strain ATCC 24698 / 74-OR23-1A / CBS 708.71 / DSM 1257 / FGSC 987), this protein is Cytochrome c peroxidase, mitochondrial (ccp-1).